Reading from the N-terminus, the 298-residue chain is Glutamyl-Q tRNA(Asp) synthetase (298 aa).

Residues R9–S13 and E45 contribute to the L-glutamate site. The short motif at P12–S22 is the 'HIGH' region element. The Zn(2+) site is built by C101, C103, Y115, and C119. Residues Y172 and R190 each contribute to the L-glutamate site. The 'KMSKS' region signature appears at K228–Q232. Residue K231 coordinates ATP.

This sequence belongs to the class-I aminoacyl-tRNA synthetase family. GluQ subfamily. Requires Zn(2+) as cofactor.

Its function is as follows. Catalyzes the tRNA-independent activation of glutamate in presence of ATP and the subsequent transfer of glutamate onto a tRNA(Asp). Glutamate is transferred on the 2-amino-5-(4,5-dihydroxy-2-cyclopenten-1-yl) moiety of the queuosine in the wobble position of the QUC anticodon. The protein is Glutamyl-Q tRNA(Asp) synthetase of Salmonella choleraesuis (strain SC-B67).